A 453-amino-acid polypeptide reads, in one-letter code: Probable glucan endo-1,3-beta-glucosidase eglC (453 aa).

The signal sequence occupies residues 1–18; it reads MQTRQLLALALAVAATEA. The active-site Proton donor is E128. N183 carries an N-linked (GlcNAc...) asparagine glycan. E239 acts as the Nucleophile in catalysis. Residues N364, N368, and N376 are each glycosylated (N-linked (GlcNAc...) asparagine). Polar residues predominate over residues 370-380; the sequence is TYPGSWNSTRP. Residues 370–423 are disordered; the sequence is TYPGSWNSTRPGANGGSSGSSGSSGSSGSSGSSGSSGSGASGHSSSTGSSSFPS. 2 stretches are compositionally biased toward low complexity: residues 389–402 and 410–423; these read SSGS…SGSS and SGHS…SFPS. N430 is lipidated: GPI-anchor amidated asparagine. A propeptide spans 431-453 (removed in mature form); it reads SASGLSGSLFGAVAAVFVALAAL.

Belongs to the glycosyl hydrolase 17 family. In terms of processing, the GPI-anchor is attached to the protein in the endoplasmic reticulum and serves to target the protein to the cell surface. There, the glucosamine-inositol phospholipid moiety is cleaved off and the GPI-modified mannoprotein is covalently attached via its lipidless GPI glycan remnant to the 1,6-beta-glucan of the outer cell wall layer.

The protein localises to the cell membrane. The protein resides in the secreted. It is found in the cell wall. The enzyme catalyses Hydrolysis of (1-&gt;3)-beta-D-glucosidic linkages in (1-&gt;3)-beta-D-glucans.. In terms of biological role, glucanases play a role in cell expansion during growth, in cell-cell fusion during mating, and in spore release during sporulation. This enzyme may be involved in beta-glucan degradation and also function biosynthetically as a transglycosylase. The protein is Probable glucan endo-1,3-beta-glucosidase eglC (eglC) of Aspergillus clavatus (strain ATCC 1007 / CBS 513.65 / DSM 816 / NCTC 3887 / NRRL 1 / QM 1276 / 107).